The chain runs to 775 residues: Glutamine--tRNA ligase (775 aa).

Alanine 2 carries the N-acetylalanine modification. Residue serine 70 is modified to Phosphoserine. Residues 271–273 (EPN) and 277–283 (HIGHAKA) contribute to the ATP site. Position 303 (aspartate 303) interacts with L-glutamine. The residue at position 309 (lysine 309) is an N6-acetyllysine. Position 438 (tyrosine 438) interacts with L-glutamine. Residues threonine 457, 486–487 (RL), and 494–496 (VSK) each bind ATP. At serine 495 the chain carries Phosphoserine.

It belongs to the class-I aminoacyl-tRNA synthetase family. As to quaternary structure, monomer. Part of a multisubunit complex that groups tRNA ligases for Arg (RARS1), Asp (DARS1), Gln (QARS1), Ile (IARS1), Leu (LARS1), Lys (KARS1), Met (MARS1) the bifunctional ligase for Glu and Pro (EPRS1) and the auxiliary subunits AIMP1/p43, AIMP2/p38 and EEF1E1/p18. Interacts with RARS1. Part of a complex composed of RARS1, QARS1 and AIMP1. As to expression, detected in dorsal root ganglia (at protein level). Detected in dorsal root ganglia.

Its subcellular location is the cytoplasm. The protein localises to the cytosol. The enzyme catalyses tRNA(Gln) + L-glutamine + ATP = L-glutaminyl-tRNA(Gln) + AMP + diphosphate. Its function is as follows. Glutamine--tRNA ligase. Plays a critical role in brain development. The polypeptide is Glutamine--tRNA ligase (Qars1) (Rattus norvegicus (Rat)).